The following is a 212-amino-acid chain: CRIB domain-containing protein RIC6 (212 aa).

In terms of domain architecture, CRIB spans 34-47 (IGNPTDVKHVAHIG). Positions 51-212 (PSANATAPSW…MPQFDNRDDF (162 aa)) are disordered. Residues 53–65 (ANATAPSWMTEFN) show a composition bias toward polar residues. Positions 106-121 (AASEKGSPTKDKSSDK) are enriched in basic and acidic residues. Residues 192 to 202 (EYMSETGSVRS) show a composition bias toward polar residues.

In terms of assembly, interacts with ARAC11/ROP1. Expressed in flowers and pollen.

The protein resides in the cell membrane. Functionally, functions as a downstream effector of Rho-related GTP binding proteins of the 'Rho of Plants' (ROPs) family. Participates in the propagation of ROP GTPase signals in specific cellular responses. Is involved in pollen tube growth regulation through its interaction with ARAC11/ROP1. The chain is CRIB domain-containing protein RIC6 (RIC6) from Arabidopsis thaliana (Mouse-ear cress).